The sequence spans 480 residues: Proline--tRNA ligase (480 aa).

The protein belongs to the class-II aminoacyl-tRNA synthetase family. ProS type 3 subfamily. In terms of assembly, homodimer.

It localises to the cytoplasm. It carries out the reaction tRNA(Pro) + L-proline + ATP = L-prolyl-tRNA(Pro) + AMP + diphosphate. Its function is as follows. Catalyzes the attachment of proline to tRNA(Pro) in a two-step reaction: proline is first activated by ATP to form Pro-AMP and then transferred to the acceptor end of tRNA(Pro). This chain is Proline--tRNA ligase, found in Roseiflexus castenholzii (strain DSM 13941 / HLO8).